The sequence spans 347 residues: Probable inactive UDP-arabinopyranose mutase 2 (347 aa).

R145 carries an N-linked (Glc...) arginine glycan.

It belongs to the RGP family. As to quaternary structure, heteromers with UAM1 and UAM3. Is not reversibly glycosylated in vitro by UDP-glucose, UDP-xylose and UDP-galactose.

It is found in the golgi apparatus. Functionally, probable inactive UDP-L-arabinose mutase. Inactive in vitro, but associates with UAM1 and UAM3. The polypeptide is Probable inactive UDP-arabinopyranose mutase 2 (Oryza sativa subsp. japonica (Rice)).